The chain runs to 213 residues: RNA polymerase I subunit H (213 aa).

Residues 1–19 (MVERMKKDTGDETKTKVQE) show a composition bias toward basic and acidic residues. The disordered stretch occupies residues 1–70 (MVERMKKDTG…AREFTDKPWR (70 aa)). A compositionally biased stretch (pro residues) spans 21-31 (PPSPSPPPPPP). Composition is skewed to basic and acidic residues over residues 43 to 53 (VPEREKKQIER) and 60 to 69 (HAREFTDKPW).

In terms of tissue distribution, expressed during spermatogenesis, initially at pachytene stage with abundance increasing in round spermatids and decreasing again during spermatid elongation.

May be involved in male sterility. The chain is RNA polymerase I subunit H from Mus musculus (Mouse).